The primary structure comprises 335 residues: Beta-hexosaminidase (335 aa).

Substrate-binding positions include aspartate 60, arginine 68, arginine 133, and 163–164; that span reads KH. Histidine 176 functions as the Proton donor/acceptor in the catalytic mechanism. Catalysis depends on aspartate 247, which acts as the Nucleophile.

It belongs to the glycosyl hydrolase 3 family. NagZ subfamily.

It localises to the cytoplasm. The catalysed reaction is Hydrolysis of terminal non-reducing N-acetyl-D-hexosamine residues in N-acetyl-beta-D-hexosaminides.. The protein operates within cell wall biogenesis; peptidoglycan recycling. Functionally, plays a role in peptidoglycan recycling by cleaving the terminal beta-1,4-linked N-acetylglucosamine (GlcNAc) from peptide-linked peptidoglycan fragments, giving rise to free GlcNAc, anhydro-N-acetylmuramic acid and anhydro-N-acetylmuramic acid-linked peptides. In Stenotrophomonas maltophilia (strain K279a), this protein is Beta-hexosaminidase.